Consider the following 70-residue polypeptide: ATP synthase subunit c (70 aa).

The next 2 membrane-spanning stretches (helical) occupy residues Ala3 to Ala23 and Leu44 to Phe64.

The protein belongs to the ATPase C chain family. As to quaternary structure, F-type ATPases have 2 components, F(1) - the catalytic core - and F(0) - the membrane proton channel. F(1) has five subunits: alpha(3), beta(3), gamma(1), delta(1), epsilon(1). F(0) has three main subunits: a(1), b(2) and c(10-14). The alpha and beta chains form an alternating ring which encloses part of the gamma chain. F(1) is attached to F(0) by a central stalk formed by the gamma and epsilon chains, while a peripheral stalk is formed by the delta and b chains.

The protein resides in the cell membrane. Its function is as follows. F(1)F(0) ATP synthase produces ATP from ADP in the presence of a proton or sodium gradient. F-type ATPases consist of two structural domains, F(1) containing the extramembraneous catalytic core and F(0) containing the membrane proton channel, linked together by a central stalk and a peripheral stalk. During catalysis, ATP synthesis in the catalytic domain of F(1) is coupled via a rotary mechanism of the central stalk subunits to proton translocation. Functionally, key component of the F(0) channel; it plays a direct role in translocation across the membrane. A homomeric c-ring of between 10-14 subunits forms the central stalk rotor element with the F(1) delta and epsilon subunits. This is ATP synthase subunit c from Caldicellulosiruptor bescii (strain ATCC BAA-1888 / DSM 6725 / KCTC 15123 / Z-1320) (Anaerocellum thermophilum).